The following is a 107-amino-acid chain: Integration host factor subunit alpha (107 aa).

This sequence belongs to the bacterial histone-like protein family. In terms of assembly, heterodimer of an alpha and a beta chain.

Its function is as follows. This protein is one of the two subunits of integration host factor, a specific DNA-binding protein that functions in genetic recombination as well as in transcriptional and translational control. This Brucella abortus (strain S19) protein is Integration host factor subunit alpha.